Here is an 88-residue protein sequence, read N- to C-terminus: Phosphocarrier protein HPr (88 aa).

Residues 1–88 enclose the HPr domain; it reads MEQQSYTIID…DVLSKEGLTE (88 aa). His-15 serves as the catalytic Pros-phosphohistidine intermediate. Residue Ser-46 is modified to Phosphoserine; by HPrK/P.

It belongs to the HPr family.

Its subcellular location is the cytoplasm. Phosphorylation on Ser-46 inhibits the phosphoryl transfer from enzyme I to HPr. General (non sugar-specific) component of the phosphoenolpyruvate-dependent sugar phosphotransferase system (sugar PTS). This major carbohydrate active-transport system catalyzes the phosphorylation of incoming sugar substrates concomitantly with their translocation across the cell membrane. The phosphoryl group from phosphoenolpyruvate (PEP) is transferred to the phosphoryl carrier protein HPr by enzyme I. Phospho-HPr then transfers it to the PTS EIIA domain. Its function is as follows. P-Ser-HPr interacts with the catabolite control protein A (CcpA), forming a complex that binds to DNA at the catabolite response elements cre, operator sites preceding a large number of catabolite-regulated genes. Thus, P-Ser-HPr is a corepressor in carbon catabolite repression (CCR), a mechanism that allows bacteria to coordinate and optimize the utilization of available carbon sources. P-Ser-HPr also plays a role in inducer exclusion, in which it probably interacts with several non-PTS permeases and inhibits their transport activity. This is Phosphocarrier protein HPr (ptsH) from Staphylococcus carnosus.